We begin with the raw amino-acid sequence, 314 residues long: tRNA-cytidine(32) 2-sulfurtransferase (314 aa).

Positions 39–44 match the PP-loop motif motif; the sequence is SGGKDS. [4Fe-4S] cluster contacts are provided by Cys114, Cys117, and Cys205.

The protein belongs to the TtcA family. Homodimer. It depends on Mg(2+) as a cofactor. [4Fe-4S] cluster serves as cofactor.

It localises to the cytoplasm. The catalysed reaction is cytidine(32) in tRNA + S-sulfanyl-L-cysteinyl-[cysteine desulfurase] + AH2 + ATP = 2-thiocytidine(32) in tRNA + L-cysteinyl-[cysteine desulfurase] + A + AMP + diphosphate + H(+). It participates in tRNA modification. In terms of biological role, catalyzes the ATP-dependent 2-thiolation of cytidine in position 32 of tRNA, to form 2-thiocytidine (s(2)C32). The sulfur atoms are provided by the cysteine/cysteine desulfurase (IscS) system. This Cupriavidus metallidurans (strain ATCC 43123 / DSM 2839 / NBRC 102507 / CH34) (Ralstonia metallidurans) protein is tRNA-cytidine(32) 2-sulfurtransferase.